Reading from the N-terminus, the 453-residue chain is Phenolic glucoside malonyltransferase 1 (453 aa).

His-165 acts as the Proton acceptor in catalysis. The short motif at 165-169 is the HXXXD motif element; the sequence is HVAGD. Residues Lys-254, His-266, and 268 to 269 each bind malonyl-CoA; that span reads TS. Asp-394 acts as the Proton acceptor in catalysis. A DFGWG motif motif is present at residues 394 to 398; the sequence is DFGWG.

Belongs to the plant acyltransferase family. Phenolic glucoside malonyltransferase subfamily. In terms of assembly, monomer. Highly expressed in flower. Also expressed in flower bud, stem, root and leaf.

It catalyses the reaction a flavonol 3-O-beta-D-glucoside + malonyl-CoA = a flavonol 3-O-(6-O-malonyl-beta-D-glucoside) + CoA. It carries out the reaction a flavonol 7-O-beta-D-glucoside + malonyl-CoA = a flavonol 7-O-(6-O-malonyl-beta-D-glucoside) + CoA. Functionally, malonyltransferase with broad substrate specificity acting on phenolic glucosides including xenobiotic naphthols. Has activity against flavonoid 7-O-glucosides, flavonoid 3-O-glucosides and naphthol glucosides, and to a lesser extent against coumarin glucosides in vitro. Prefers malonyl-CoA as an acyl donor, but also active with succinyl-CoA and methylmalonyl-CoA, but not with acetyl-CoA. The protein is Phenolic glucoside malonyltransferase 1 of Nicotiana tabacum (Common tobacco).